A 226-amino-acid polypeptide reads, in one-letter code: Probable amino-acid ABC transporter permease protein YckA (226 aa).

Positions 27 to 215 constitute an ABC transmembrane type-1 domain; it reads IGYTLLISFV…AICSIAAVFQ (189 aa). Transmembrane regions (helical) follow at residues 31–51, 73–93, 94–114, 160–180, and 194–214; these read LLIS…ISLA, VPIL…GIEF, SAVT…IAEI, VLLD…PELL, and MTMY…AAVF.

This sequence belongs to the binding-protein-dependent transport system permease family. HisMQ subfamily.

It is found in the cell membrane. Part of a binding-protein-dependent transport system. Probably responsible for the translocation of the substrate across the membrane. This Bacillus subtilis (strain 168) protein is Probable amino-acid ABC transporter permease protein YckA (yckA).